The sequence spans 193 residues: 3-isopropylmalate dehydratase small subunit (193 aa).

This sequence belongs to the LeuD family. LeuD type 1 subfamily. As to quaternary structure, heterodimer of LeuC and LeuD.

It carries out the reaction (2R,3S)-3-isopropylmalate = (2S)-2-isopropylmalate. Its pathway is amino-acid biosynthesis; L-leucine biosynthesis; L-leucine from 3-methyl-2-oxobutanoate: step 2/4. Catalyzes the isomerization between 2-isopropylmalate and 3-isopropylmalate, via the formation of 2-isopropylmaleate. This chain is 3-isopropylmalate dehydratase small subunit, found in Bacillus anthracis (strain CDC 684 / NRRL 3495).